We begin with the raw amino-acid sequence, 913 residues long: Cadherin-4 (913 aa).

An N-terminal signal peptide occupies residues 1–19; it reads MRTGSRLLLVLLVWGSAAA. Positions 20-166 are excised as a propeptide; the sequence is LNGDLTVRPT…SAKGLRRQKR (147 aa). Cadherin domains lie at 167-274, 275-389, 390-504, 505-610, and 611-721; these read DWVI…RPEF, INQV…PPEF, TTST…APYF, PTNH…DNAP, and ELLP…TIGA. Residues 167 to 731 are Extracellular-facing; that stretch reads DWVIPPINVP…VAAAGLGTGA (565 aa). 6 N-linked (GlcNAc...) asparagine glycosylation sites follow: asparagine 280, asparagine 409, asparagine 554, asparagine 629, asparagine 658, and asparagine 699. A helical membrane pass occupies residues 732-753; the sequence is IIAILICIIILLTMVLLFVVWM. Over 754–913 the chain is Cytoplasmic; sequence KRREKERHTK…ADMYGGGEED (160 aa).

In terms of tissue distribution, embryonic brain and neuronal retina.

The protein resides in the cell membrane. In terms of biological role, cadherins are calcium-dependent cell adhesion proteins. They preferentially interact with themselves in a homophilic manner in connecting cells; cadherins may thus contribute to the sorting of heterogeneous cell types. May play an important role in retinal development. This chain is Cadherin-4 (CDH4), found in Gallus gallus (Chicken).